The sequence spans 469 residues: Argininosuccinate lyase (469 aa).

Belongs to the lyase 1 family. Argininosuccinate lyase subfamily.

It is found in the cytoplasm. The catalysed reaction is 2-(N(omega)-L-arginino)succinate = fumarate + L-arginine. Its pathway is amino-acid biosynthesis; L-arginine biosynthesis; L-arginine from L-ornithine and carbamoyl phosphate: step 3/3. The chain is Argininosuccinate lyase from Novosphingobium aromaticivorans (strain ATCC 700278 / DSM 12444 / CCUG 56034 / CIP 105152 / NBRC 16084 / F199).